The following is a 222-amino-acid chain: Large ribosomal subunit protein uL1 (222 aa).

Belongs to the universal ribosomal protein uL1 family. Part of the 50S ribosomal subunit.

In terms of biological role, binds directly to 23S rRNA. Probably involved in E site tRNA release. Protein L1 is also a translational repressor protein, it controls the translation of its operon by binding to its mRNA. This chain is Large ribosomal subunit protein uL1, found in Pyrobaculum neutrophilum (strain DSM 2338 / JCM 9278 / NBRC 100436 / V24Sta) (Thermoproteus neutrophilus).